The following is a 78-amino-acid chain: Mandibular organ-inhibiting hormone 1 (78 aa).

Cystine bridges form between Cys7-Cys44, Cys24-Cys40, and Cys27-Cys53.

It belongs to the arthropod CHH/MIH/GIH/VIH hormone family. Produced by the medulla terminalis X-organ in the eyestalks and transported to the sinus gland where it is stored and released.

The protein localises to the secreted. In terms of biological role, represses the synthesis of methyl farnesoate, the precursor of insect juvenile hormone III in the mandibular organ. The protein is Mandibular organ-inhibiting hormone 1 of Cancer pagurus (Rock crab).